Reading from the N-terminus, the 121-residue chain is uncharacterized protein (121 aa).

Residues 20-98 (NEVRTSQSEV…PYYHGSKAST (79 aa)) are disordered. Over residues 35–51 (KKSDNGEKDEKEEKELN) the composition is skewed to basic and acidic residues.

This is an uncharacterized protein from Invertebrate iridescent virus 6 (IIV-6).